The primary structure comprises 557 residues: T-complex protein 1 subunit theta-like 2 (557 aa).

Disordered regions lie at residues 1–33 and 531–557; these read MDSTVPSALELPQRLALNPRESPRSPEEEEPHL and EIWNPDSKKTKKHPPPVETKKILGLNN.

It belongs to the TCP-1 chaperonin family.

The protein localises to the cytoplasm. Functionally, possible molecular chaperone; assists the folding of proteins upon ATP hydrolysis. This is T-complex protein 1 subunit theta-like 2 (CCT8L2) from Homo sapiens (Human).